A 382-amino-acid chain; its full sequence is Quinolinate synthase (382 aa).

His-63 and Ser-84 together coordinate iminosuccinate. Residue Cys-129 participates in [4Fe-4S] cluster binding. Iminosuccinate-binding positions include 155-157 (YAN) and Ser-172. [4Fe-4S] cluster is bound at residue Cys-216. Iminosuccinate contacts are provided by residues 242 to 244 (HPE) and Thr-259. Residue Cys-313 participates in [4Fe-4S] cluster binding.

It belongs to the quinolinate synthase family. Type 1 subfamily. It depends on [4Fe-4S] cluster as a cofactor.

It localises to the cytoplasm. It carries out the reaction iminosuccinate + dihydroxyacetone phosphate = quinolinate + phosphate + 2 H2O + H(+). The protein operates within cofactor biosynthesis; NAD(+) biosynthesis; quinolinate from iminoaspartate: step 1/1. In terms of biological role, catalyzes the condensation of iminoaspartate with dihydroxyacetone phosphate to form quinolinate. This is Quinolinate synthase from Ralstonia pickettii (strain 12J).